The following is a 409-amino-acid chain: Tryptophan synthase beta chain (409 aa).

N6-(pyridoxal phosphate)lysine is present on K86.

Belongs to the TrpB family. Tetramer of two alpha and two beta chains. Pyridoxal 5'-phosphate serves as cofactor.

It carries out the reaction (1S,2R)-1-C-(indol-3-yl)glycerol 3-phosphate + L-serine = D-glyceraldehyde 3-phosphate + L-tryptophan + H2O. The protein operates within amino-acid biosynthesis; L-tryptophan biosynthesis; L-tryptophan from chorismate: step 5/5. In terms of biological role, the beta subunit is responsible for the synthesis of L-tryptophan from indole and L-serine. This Shewanella pealeana (strain ATCC 700345 / ANG-SQ1) protein is Tryptophan synthase beta chain.